Here is a 443-residue protein sequence, read N- to C-terminus: Monooxygenase asqM (443 aa).

Belongs to the aromatic-ring hydroxylase family. FAD serves as cofactor.

It functions in the pathway secondary metabolite biosynthesis. Its pathway is alkaloid biosynthesis. The protein operates within mycotoxin biosynthesis. Its function is as follows. Monooxygenase; part of the gene cluster that mediates the biosynthesis of the aspoquinolone mycotoxins. The role of asqM within the aspoquinolone pathway has still to be determined. The first step of the pathway is catalyzed by the nonribosomal peptide synthetase asqK that condenses anthranilic acid and O-methyl-L-tyrosine to produce 4'-methoxycyclopeptin. 4'-methoxycyclopeptin is then converted to 4'-methoxydehydrocyclopeptin by the ketoglutarate-dependent dioxygenase asqJ. AsqJ also converts its first product 4'-methoxydehydrocyclopeptin to 4'-methoxycyclopenin. The following conversion of 4'-methoxycyclopenin into 4'-methoxyviridicatin is catalyzed by the cyclopenase asqI. 4'-methoxyviridicatin is the precursor of quinolone natural products, and is further converted to quinolinone B. The prenyltransferase asqH1 then catalyzes the canonical Friedel-Crafts alkylation of quinolinone B with dimethylallyl cation to yield dimethylallyl quinolone, which is subjected to FAD-dependent dehydrogenation by the FAD-linked oxidoreductase asqF to yield conjugated aryl diene. The delta(3') double bond then serves as the site of the second alkylation with DMAPP catalyzed by the prenyltransferase asqH2 to yield a carbenium ion intermediate, which can be attacked by H(2)O to yield a styrenyl quinolone containing a C3'-hydroxyprenyl chain. The FAD-dependent monooxygenase asqG performs epoxidation of the terminal C7'-C8' olefin. Finally, after dehydratation of the epoxide at C3 by asqC, the quinolone epoxide rearrangement protein asqO catalyzes an enzymatic 3-exo-tet cyclization to yield the cyclopropyl-THF ring system in aspoquinolone. The polypeptide is Monooxygenase asqM (Emericella nidulans (strain FGSC A4 / ATCC 38163 / CBS 112.46 / NRRL 194 / M139) (Aspergillus nidulans)).